The sequence spans 57 residues: UPF0337 protein SAV_1088 (57 aa).

Basic and acidic residues-rich tracts occupy residues 1–15 (MAGD…EQAK) and 36–57 (QAEK…VFKH). Residues 1 to 57 (MAGDQKAKAKMEQAKGKAKAAAGRAVGNERMAAEGQAEKSKGDARQAKEKTKDVFKH) are disordered.

The protein belongs to the UPF0337 (CsbD) family.

This is UPF0337 protein SAV_1088 from Streptomyces avermitilis (strain ATCC 31267 / DSM 46492 / JCM 5070 / NBRC 14893 / NCIMB 12804 / NRRL 8165 / MA-4680).